We begin with the raw amino-acid sequence, 261 residues long: Type III pantothenate kinase (261 aa).

Position 7–14 (7–14 (EQGNTNTM)) interacts with ATP. 108-111 (GADR) contacts substrate. Asp-110 serves as the catalytic Proton acceptor. Residue Asp-130 participates in K(+) binding. Thr-133 contacts ATP. Thr-187 contacts substrate.

Belongs to the type III pantothenate kinase family. In terms of assembly, homodimer. NH4(+) is required as a cofactor. The cofactor is K(+).

The protein localises to the cytoplasm. The enzyme catalyses (R)-pantothenate + ATP = (R)-4'-phosphopantothenate + ADP + H(+). The protein operates within cofactor biosynthesis; coenzyme A biosynthesis; CoA from (R)-pantothenate: step 1/5. Its function is as follows. Catalyzes the phosphorylation of pantothenate (Pan), the first step in CoA biosynthesis. The chain is Type III pantothenate kinase from Caulobacter vibrioides (strain ATCC 19089 / CIP 103742 / CB 15) (Caulobacter crescentus).